The chain runs to 241 residues: Folate receptor alpha (241 aa).

An N-terminal signal peptide occupies residues 1–19 (MAWQMTQLLLLALVAAAWG). 8 cysteine pairs are disulfide-bonded: C36/C64, C56/C104, C65/C108, C88/C174, C95/C145, C134/C208, C138/C188, and C151/C168. An N-linked (GlcNAc...) asparagine glycan is attached at N68. Residues D102, Y106, 123 to 127 (WRKER), 156 to 161 (HKGWNW), and S195 contribute to the folate site. N-linked (GlcNAc...) asparagine glycosylation occurs at N160. S234 carries the GPI-anchor amidated serine lipid modification. The propeptide at 235–241 (GSTPQGI) is removed in mature form.

The protein belongs to the folate receptor family. The secreted form is derived from the membrane-bound form either by cleavage of the GPI anchor, or/and by proteolysis catalyzed by a metalloprotease. As to expression, detected in milk (at protein level).

It is found in the cell membrane. It localises to the apical cell membrane. The protein resides in the basolateral cell membrane. Its subcellular location is the secreted. The protein localises to the cytoplasmic vesicle. It is found in the clathrin-coated vesicle. It localises to the endosome. Functionally, binds to folate and reduced folic acid derivatives and mediates delivery of 5-methyltetrahydrofolate and folate analogs into the interior of cells. Has high affinity for folate and folic acid analogs at neutral pH. Exposure to slightly acidic pH after receptor endocytosis triggers a conformation change that strongly reduces its affinity for folates and mediates their release. Required for normal embryonic development and normal cell proliferation. The sequence is that of Folate receptor alpha (FOLR1) from Bos taurus (Bovine).